We begin with the raw amino-acid sequence, 443 residues long: Fatty acid desaturase 3 (443 aa).

Topologically, residues 1–130 (MGGVGEPDWE…EDMKLFEAKP (130 aa)) are cytoplasmic. The Cytochrome b5 heme-binding domain maps to 18–95 (LPTLRWEQVR…LQPLLIGELA (78 aa)). A helical transmembrane segment spans residues 131–151 (AFFGLLLGHILAMEVLAWLMI). Y152 is a topological domain (lumenal). Residues 153 to 173 (MLGPGWVPSTLAALILAISQA) traverse the membrane as a helical segment. The Cytoplasmic portion of the chain corresponds to 174 to 259 (QSWCLQHDLG…KKKRRYLPYN (86 aa)). Residues 180–184 (HDLGH) carry the Histidine box-1 motif. Residues 217–221 (HFQHH) carry the Histidine box-2 motif. A helical membrane pass occupies residues 260–280 (HQHLYFFLIGPPLLTLVNFEV). At 281–282 (EN) the chain is on the lumenal side. A helical membrane pass occupies residues 283 to 303 (LAYMLVCMQWMDLLWAASFYA). R304 is a topological domain (cytoplasmic). Residues 305 to 325 (FLLSYIPFYGIPGALLLFVAV) form a helical membrane-spanning segment. Residues 326–443 (RVLESHWFVW…NVWLEAYLHQ (118 aa)) lie on the Lumenal side of the membrane. The Histidine box-3 signature appears at 381–385 (QIEHH).

This sequence belongs to the fatty acid desaturase type 1 family.

The protein localises to the endoplasmic reticulum membrane. It catalyses the reaction an N-acylsphing-4-enine + 2 Fe(II)-[cytochrome b5] + O2 + 2 H(+) = an N-acyl-sphinga-4E,14Z-dienine + 2 Fe(III)-[cytochrome b5] + 2 H2O. The enzyme catalyses N-(hexanoyl)sphing-4-enine + 2 Fe(II)-[cytochrome b5] + O2 + 2 H(+) = N-hexanoyl-sphinga-4E,14Z-dienine + 2 Fe(III)-[cytochrome b5] + 2 H2O. It carries out the reaction sphing-4-enine + 2 Fe(II)-[cytochrome b5] + O2 + 2 H(+) = sphinga-4E,14Z-dienine + 2 Fe(III)-[cytochrome b5] + 2 H2O. The catalysed reaction is (11E)-octadecenoyl-CoA + 2 Fe(II)-[cytochrome b5] + O2 + 2 H(+) = (11E,13Z)-octadecadienoyl-CoA + 2 Fe(III)-[cytochrome b5] + 2 H2O. It catalyses the reaction N-acyl-1-deoxysphinganine + 2 Fe(II)-[cytochrome b5] + O2 + 2 H(+) = N-acyl-1-deoxysphing-14Z-enine + 2 Fe(III)-[cytochrome b5] + 2 H2O. The enzyme catalyses an N-acylsphinganine + 2 Fe(II)-[cytochrome b5] + O2 + 2 H(+) = an N-acylsphing-14Z-enine + 2 Fe(III)-[cytochrome b5] + 2 H2O. It functions in the pathway lipid metabolism; polyunsaturated fatty acid biosynthesis. It participates in lipid metabolism; sphingolipid metabolism. In terms of biological role, mammals have different sphingoid bases that differ in their length and/or pattern of desaturation and hydroxyl groups. The predominant sphingoid base that comprises mammalian ceramides is sphing-4-enine (sphingosine or SPH) which has a trans (E) desaturation at carbon 4. FADS3 is a desaturase that introduces a cis (Z) double bond between carbon 14 and carbon 15 of the sphingoid base (also known as long chain base, LCB), producing LCBs such as sphinga-4,14-dienine (SPD, d18:2(4E,14Z)) from SPH. Prefers SPH-containing ceramides (N-acylsphing-4-enines) as substrates. Capable of metabolizing also the SPH in its free form. SPD ceramides occur widely in mammalian tissues and cells. Due to their unusual structure containing a cis double bond, SPD ceramides may have an opposite, negative role in lipid microdomain formation relative to conventional ceramides. Could be involved in the detoxification of 1-deoxy sphingolipids, by desaturating the cytotoxic 1-deoxysphinganine (1-deoxySA, m18:0), produced under pathological conditions, to 1-deoxysphingenine (1-deoxysphingosine, 1-deoxySO, m18:1). Although prefers SPH-containing ceramides (N-acylsphing-4-enines) as substrates, it also exhibits activity toward dihydrosphingosine-containing CERs (N-acylsphinganines) and produces 14Z-SPH-containing sphingolipids. Its desaturase mechanism involves an electron transfer facilitated by cytochrome b5. FADS3 also acts as a methyl-end fatty acyl coenzyme A (CoA) desaturase that introduces a cis double bond between the preexisting double bond and the terminal methyl group of the fatty acyl chain. Desaturates (11E)-octadecenoate (trans-vaccenoate, the predominant trans fatty acid in human milk) at carbon 13 to generate (11E,13Z)-octadecadienoate (also known as conjugated linoleic acid 11E,13Z-CLA). The sequence is that of Fatty acid desaturase 3 from Bos taurus (Bovine).